An 86-amino-acid chain; its full sequence is Large ribosomal subunit protein bL31B (86 aa).

Belongs to the bacterial ribosomal protein bL31 family. Type B subfamily. Part of the 50S ribosomal subunit.

In Streptococcus agalactiae serotype Ia (strain ATCC 27591 / A909 / CDC SS700), this protein is Large ribosomal subunit protein bL31B.